The following is a 1470-amino-acid chain: Roundabout homolog 2 (1470 aa).

The first 21 residues, 1–21 (MNPLMFTLLLLFGFLCIQIDG), serve as a signal peptide directing secretion. At 22-863 (SRLRQEDFPP…EQITDVVKQP (842 aa)) the chain is on the extracellular side. 5 Ig-like C2-type domains span residues 31–127 (PRIV…ASLE), 133–220 (DDFR…AELT), 225–309 (PTFL…ATLT), 318–413 (PQFV…LEVT), and 422–508 (PIIL…AVLD). The cysteines at positions 52 and 110 are disulfide-linked. N-linked (GlcNAc...) asparagine glycosylation occurs at asparagine 123. 3 disulfide bridges follow: cysteine 154–cysteine 203, cysteine 246–cysteine 293, and cysteine 339–cysteine 395. Asparagine 430 is a glycosylation site (N-linked (GlcNAc...) asparagine). Cysteine 443 and cysteine 492 form a disulfide bridge. 3 Fibronectin type-III domains span residues 528–622 (PPSK…TQDI), 641–739 (VVVR…TEEA), and 743–840 (PPQS…IGGR). Residues asparagine 756, asparagine 786, asparagine 793, and asparagine 849 are each glycosylated (N-linked (GlcNAc...) asparagine). A helical transmembrane segment spans residues 864 to 884 (AFIAGIGGACWVILMGFSIWL). Over 885–1470 (YWRRKKRKGL…GSNSQGQFTE (586 aa)) the chain is Cytoplasmic. Disordered regions lie at residues 1036-1089 (GFGY…LPGT), 1129-1159 (EDRVPTPPVRGVASSPAISFGQQSTATLTPS), 1190-1371 (IQSN…DCPA), and 1383-1470 (DWIN…QFTE). The segment covering 1144–1158 (PAISFGQQSTATLTP) has biased composition (polar residues). Residue threonine 1157 is modified to Phosphothreonine. Position 1159 is a phosphoserine (serine 1159). Residues 1194-1203 (TPPPQPPAPP) are compositionally biased toward pro residues. Acidic residues predominate over residues 1215 to 1231 (LETDVPDEDADDEEEPL). The span at 1243-1288 (TPGSSMDNLDSSVTGKAFSSSQRQRPTSPFSTDSNTSAAQNQSQRP) shows a compositional bias: polar residues. A compositionally biased stretch (pro residues) spans 1315–1325 (DLPPPPDPPPG). Positions 1328-1343 (LRQQIGLSQHSGNVEN) are enriched in polar residues. Residues 1413-1437 (SKPSFPSPGGHSSSGTSSSKGSTGP) are compositionally biased toward low complexity. Residues 1461–1470 (GSNSQGQFTE) are compositionally biased toward polar residues.

It belongs to the immunoglobulin superfamily. ROBO family. Interacts with SLIT2. Expressed in embryonal spinal cord.

The protein localises to the membrane. Functionally, receptor for SLIT2, and probably SLIT1, which are thought to act as molecular guidance cue in cellular migration, including axonal navigation at the ventral midline of the neural tube and projection of axons to different regions during neuronal development. The chain is Roundabout homolog 2 (Robo2) from Mus musculus (Mouse).